A 189-amino-acid chain; its full sequence is Selenoprotein S (189 aa).

Residues 29–49 (VVLSSYGWYILLGCILIYLLI) form a helical membrane-spanning segment. Residues 114–125 (IETWDRMKEGKS) show a composition bias toward basic and acidic residues. A disordered region spans residues 114–189 (IETWDRMKEG…RRGPSSGGUG (76 aa)). The span at 136-147 (PSPSTSTSAATK) shows a compositional bias: low complexity. Residues 148–157 (PKQEKQERKT) are compositionally biased toward basic and acidic residues. Position 188 (Sec188) is a non-standard amino acid, selenocysteine.

The protein belongs to the selenoprotein S family.

It localises to the endoplasmic reticulum membrane. The protein resides in the cytoplasm. In terms of biological role, involved in the degradation process of misfolded endoplasmic reticulum (ER) luminal proteins. Participates in the transfer of misfolded proteins from the ER to the cytosol, where they are destroyed by the proteasome in a ubiquitin-dependent manner. The polypeptide is Selenoprotein S (vimp) (Xenopus tropicalis (Western clawed frog)).